The chain runs to 93 residues: Beta-defensin 128 (93 aa).

An N-terminal signal peptide occupies residues 1–18 (MKLFLVLIILLFEVLTDG). Cystine bridges form between C24/C52, C32/C46, and C36/C53.

It belongs to the beta-defensin family.

Its subcellular location is the secreted. Has antibacterial activity. This chain is Beta-defensin 128 (DEFB128), found in Macaca fascicularis (Crab-eating macaque).